Here is a 213-residue protein sequence, read N- to C-terminus: Carboxysome shell protein CcmP (213 aa).

2 BMC circularly permuted domains span residues 4-106 and 107-211; these read ELRS…RLKP and KIVS…GDRS. The Probably important for pore gating signature appears at 69–70; that stretch reads ER.

The protein belongs to the EutL/PduB family. As to quaternary structure, a dimer of stacked trimers, the same faces interact.

Its subcellular location is the carboxysome. Its function is as follows. Probably part of the carboxysome shell, a polyhedral inclusion where RuBisCO (ribulose bisphosphate carboxylase, rbcL-rbcS) is sequestered. It is thought that this protein controls transport of RuBisCO reactants in and out of the carboxysome; residual densities in the 4 X-ray structures suggest that differing compounds bind in interior pockets, depending on the open or closed state of the pore. The polypeptide is Carboxysome shell protein CcmP (Synechococcus elongatus (strain ATCC 33912 / PCC 7942 / FACHB-805) (Anacystis nidulans R2)).